Reading from the N-terminus, the 392-residue chain is O-phospho-L-seryl-tRNA:Cys-tRNA synthase 1 (392 aa).

Residues 85–86 (AR), asparagine 190, and 213–215 (SGH) contribute to the pyridoxal 5'-phosphate site. Lysine 216 carries the post-translational modification N6-(pyridoxal phosphate)lysine.

Belongs to the SepCysS family. Homodimer. Interacts with SepRS. It depends on pyridoxal 5'-phosphate as a cofactor.

It catalyses the reaction O-phospho-L-seryl-tRNA(Cys) + hydrogen sulfide + H(+) = L-cysteinyl-tRNA(Cys) + phosphate. Its function is as follows. Converts O-phospho-L-seryl-tRNA(Cys) (Sep-tRNA(Cys)) to L-cysteinyl-tRNA(Cys) (Cys-tRNA(Cys)). This is O-phospho-L-seryl-tRNA:Cys-tRNA synthase 1 from Methanocorpusculum labreanum (strain ATCC 43576 / DSM 4855 / Z).